We begin with the raw amino-acid sequence, 298 residues long: Myoblast determination protein 1 homolog (298 aa).

Basic and acidic residues predominate over residues 53–73; sequence PEEHPHTRAPPREPTEEEHVR. Residues 53–77 are disordered; the sequence is PEEHPHTRAPPREPTEEEHVRAPSG. Residues 100-151 form the bHLH domain; sequence DRRKAATMRERRRLSKVNEAFETLKRCTSTNPNQRLPKVEILRNAIRYIESL. 2 disordered regions span residues 170–220 and 242–298; these read SGES…GKSS and CPIL…YQVL. Polar residues-rich tracts occupy residues 173–183 and 257–284; these read SDASSPRSNCS and CSPQ…LPQE.

In terms of assembly, efficient DNA binding requires dimerization with another bHLH protein. Seems to form active heterodimers with ITF-2.

It is found in the nucleus. Functionally, acts as a transcriptional activator that promotes transcription of muscle-specific target genes and plays a role in muscle differentiation. Induces fibroblasts to differentiate into myoblasts. Interacts with and is inhibited by the twist protein. This interaction probably involves the basic domains of both proteins. The chain is Myoblast determination protein 1 homolog (MYOD1) from Gallus gallus (Chicken).